A 65-amino-acid polypeptide reads, in one-letter code: MPKIKTLRGAAKRFKKTASGGFKRKQSHLRHILTKKTTKRKRHLRHKSMVAKADQVLVVACLPYA.

Residues 1–26 form a disordered region; it reads MPKIKTLRGAAKRFKKTASGGFKRKQ. Basic residues predominate over residues 10–26; sequence AAKRFKKTASGGFKRKQ.

Belongs to the bacterial ribosomal protein bL35 family.

This Histophilus somni (strain 2336) (Haemophilus somnus) protein is Large ribosomal subunit protein bL35.